A 237-amino-acid polypeptide reads, in one-letter code: MLDLTELENSLGVKFEQPSLLEQALIHTSWVNENPNHSSGSNERMEFLGDAVLGVIFADRLYHDFPDIQEGDLTRFRSLLVRRESLVRVALGINLGKYLYLGRGEDVSKGRFKPANLAGAFEAVLAAIYIDKGMDVTREVIFRLFKTEMERVQTLSSNIDYKSRLQELIQAQLQLTPRYRITNFSGPEHNRLFIAEVYAEDRVFAEGSGRSKKEAETNAAKVALQQFENSFTDEDNI.

An RNase III domain is found at 4–133; the sequence is LTELENSLGV…VLAAIYIDKG (130 aa). Residue Glu46 coordinates Mg(2+). Residues Asp50 and Glu122 contribute to the active site. Glu122 contacts Mg(2+). Residues 160-229 enclose the DRBM domain; that stretch reads DYKSRLQELI…AKVALQQFEN (70 aa).

It belongs to the ribonuclease III family. As to quaternary structure, homodimer. Mg(2+) is required as a cofactor.

It localises to the cytoplasm. It catalyses the reaction Endonucleolytic cleavage to 5'-phosphomonoester.. In terms of biological role, digests double-stranded RNA. Involved in the processing of primary rRNA transcript to yield the immediate precursors to the large and small rRNAs (23S and 16S). Processes some mRNAs, and tRNAs when they are encoded in the rRNA operon. Processes pre-crRNA and tracrRNA of type II CRISPR loci if present in the organism. The sequence is that of Ribonuclease 3 from Dehalococcoides mccartyi (strain CBDB1).